The sequence spans 513 residues: GMP synthase [glutamine-hydrolyzing] (513 aa).

One can recognise a Glutamine amidotransferase type-1 domain in the interval 9–198 (LILVLDFGSQ…VRRVCDCRGQ (190 aa)). The active-site Nucleophile is the Cys-86. Residues His-172 and Glu-174 contribute to the active site. Residues 199 to 388 (WTMENFIEIE…LGIPEHLVWR (190 aa)) form the GMPS ATP-PPase domain. 226–232 (SGGVDSS) provides a ligand contact to ATP.

As to quaternary structure, homodimer.

The catalysed reaction is XMP + L-glutamine + ATP + H2O = GMP + L-glutamate + AMP + diphosphate + 2 H(+). It functions in the pathway purine metabolism; GMP biosynthesis; GMP from XMP (L-Gln route): step 1/1. Its function is as follows. Catalyzes the synthesis of GMP from XMP. The protein is GMP synthase [glutamine-hydrolyzing] of Staphylococcus aureus (strain USA300).